Reading from the N-terminus, the 309-residue chain is Methionyl-tRNA formyltransferase (309 aa).

(6S)-5,6,7,8-tetrahydrofolate is bound at residue 110 to 113 (SLLP).

The protein belongs to the Fmt family.

The catalysed reaction is L-methionyl-tRNA(fMet) + (6R)-10-formyltetrahydrofolate = N-formyl-L-methionyl-tRNA(fMet) + (6S)-5,6,7,8-tetrahydrofolate + H(+). Its function is as follows. Attaches a formyl group to the free amino group of methionyl-tRNA(fMet). The formyl group appears to play a dual role in the initiator identity of N-formylmethionyl-tRNA by promoting its recognition by IF2 and preventing the misappropriation of this tRNA by the elongation apparatus. The protein is Methionyl-tRNA formyltransferase of Caldanaerobacter subterraneus subsp. tengcongensis (strain DSM 15242 / JCM 11007 / NBRC 100824 / MB4) (Thermoanaerobacter tengcongensis).